The primary structure comprises 621 residues: Putative 5'-3' exonuclease R528 (621 aa).

The protein belongs to the 5'-3' exonuclease family.

The protein localises to the virion. The sequence is that of Putative 5'-3' exonuclease R528 from Acanthamoeba polyphaga mimivirus (APMV).